Consider the following 147-residue polypeptide: Lysozyme C-2 (147 aa).

An N-terminal signal peptide occupies residues 1–18 (MKALVILGFLFLSVAVQG). The 129-residue stretch at 19-147 (KVFERCELAR…VSSYVEGCTL (129 aa)) folds into the C-type lysozyme domain. Cystine bridges form between Cys-24/Cys-145, Cys-48/Cys-133, Cys-83/Cys-99, and Cys-95/Cys-113. Active-site residues include Glu-53 and Asp-71.

The protein belongs to the glycosyl hydrolase 22 family. As to quaternary structure, monomer. Stomach-specific.

It carries out the reaction Hydrolysis of (1-&gt;4)-beta-linkages between N-acetylmuramic acid and N-acetyl-D-glucosamine residues in a peptidoglycan and between N-acetyl-D-glucosamine residues in chitodextrins.. Its function is as follows. Lysozymes have primarily a bacteriolytic function; those in tissues and body fluids are associated with the monocyte-macrophage system and enhance the activity of immunoagents. This chain is Lysozyme C-2 (LYZ2), found in Bos taurus (Bovine).